Consider the following 90-residue polypeptide: Small ribosomal subunit protein bS16 (90 aa).

The protein belongs to the bacterial ribosomal protein bS16 family.

This chain is Small ribosomal subunit protein bS16, found in Lactobacillus helveticus (strain DPC 4571).